A 437-amino-acid chain; its full sequence is Anhydromevalonate phosphate decarboxylase (437 aa).

Residues N136 and E199 each contribute to the Mn(2+) site. The Proton acceptor role is filled by D247.

It belongs to the UbiD family. Prenylated FMN is required as a cofactor. The cofactor is Mn(2+).

The catalysed reaction is (2E)-3-methyl-5-phosphooxypent-2-enoate + H(+) = isopentenyl phosphate + CO2. It functions in the pathway isoprenoid biosynthesis; isopentenyl diphosphate biosynthesis via mevalonate pathway. Its function is as follows. Catalyzes the conversion of trans-anhydromevalonate 5-phosphate (tAHMP) into isopentenyl phosphate. Involved in the archaeal mevalonate (MVA) pathway, which provides fundamental precursors for isoprenoid biosynthesis, such as isopentenyl diphosphate (IPP) and dimethylallyl diphosphate (DMAPP). This Aeropyrum pernix (strain ATCC 700893 / DSM 11879 / JCM 9820 / NBRC 100138 / K1) protein is Anhydromevalonate phosphate decarboxylase.